The primary structure comprises 142 residues: Non-specific lipid transfer protein GPI-anchored 34 (142 aa).

An N-terminal signal peptide occupies residues 1-22 (MAVAVTAVLFLAVVIAPQWTET). The tract at residues 21–43 (ETKKPPRPSDTSDTSGTSGRDRR) is disordered. The span at 29 to 38 (SDTSDTSGTS) shows a compositional bias: low complexity. 4 cysteine pairs are disulfide-bonded: Cys46–Cys85, Cys57–Cys69, Cys70–Cys106, and Cys83–Cys114. Asn120 carries the GPI-anchor amidated asparagine lipid modification. A propeptide spans 121 to 142 (GGATKKIVASMGLFGVVASLFF) (removed in mature form).

It belongs to the plant LTP family.

Its subcellular location is the cell membrane. Its function is as follows. Probable lipid transfer protein. This Arabidopsis thaliana (Mouse-ear cress) protein is Non-specific lipid transfer protein GPI-anchored 34.